The chain runs to 616 residues: Dihydroxy-acid dehydratase (616 aa).

Residue Asp-81 participates in Mg(2+) binding. Residue Cys-122 participates in [2Fe-2S] cluster binding. 2 residues coordinate Mg(2+): Asp-123 and Lys-124. Lys-124 is modified (N6-carboxylysine). Residue Cys-195 participates in [2Fe-2S] cluster binding. A Mg(2+)-binding site is contributed by Glu-491. Residue Ser-517 is the Proton acceptor of the active site.

Belongs to the IlvD/Edd family. In terms of assembly, homodimer. [2Fe-2S] cluster is required as a cofactor. Requires Mg(2+) as cofactor.

It catalyses the reaction (2R)-2,3-dihydroxy-3-methylbutanoate = 3-methyl-2-oxobutanoate + H2O. It carries out the reaction (2R,3R)-2,3-dihydroxy-3-methylpentanoate = (S)-3-methyl-2-oxopentanoate + H2O. The protein operates within amino-acid biosynthesis; L-isoleucine biosynthesis; L-isoleucine from 2-oxobutanoate: step 3/4. It functions in the pathway amino-acid biosynthesis; L-valine biosynthesis; L-valine from pyruvate: step 3/4. Functions in the biosynthesis of branched-chain amino acids. Catalyzes the dehydration of (2R,3R)-2,3-dihydroxy-3-methylpentanoate (2,3-dihydroxy-3-methylvalerate) into 2-oxo-3-methylpentanoate (2-oxo-3-methylvalerate) and of (2R)-2,3-dihydroxy-3-methylbutanoate (2,3-dihydroxyisovalerate) into 2-oxo-3-methylbutanoate (2-oxoisovalerate), the penultimate precursor to L-isoleucine and L-valine, respectively. This is Dihydroxy-acid dehydratase from Escherichia fergusonii (strain ATCC 35469 / DSM 13698 / CCUG 18766 / IAM 14443 / JCM 21226 / LMG 7866 / NBRC 102419 / NCTC 12128 / CDC 0568-73).